Reading from the N-terminus, the 341-residue chain is Ketol-acid reductoisomerase (NADP(+)) (341 aa).

In terms of domain architecture, KARI N-terminal Rossmann spans 2–181 (AKVYYNGDAN…GATRAGVLET (180 aa)). NADP(+)-binding positions include 25 to 28 (YGSQ), arginine 48, serine 52, and 82 to 85 (DEKQ). Histidine 107 is an active-site residue. Residue glycine 133 coordinates NADP(+). Residues 182–327 (TFKEETETDL…RELRSMMPFV (146 aa)) form the KARI C-terminal knotted domain. Residues aspartate 190, glutamate 194, glutamate 226, and glutamate 230 each coordinate Mg(2+). Serine 251 is a binding site for substrate.

This sequence belongs to the ketol-acid reductoisomerase family. Mg(2+) serves as cofactor.

The catalysed reaction is (2R)-2,3-dihydroxy-3-methylbutanoate + NADP(+) = (2S)-2-acetolactate + NADPH + H(+). It catalyses the reaction (2R,3R)-2,3-dihydroxy-3-methylpentanoate + NADP(+) = (S)-2-ethyl-2-hydroxy-3-oxobutanoate + NADPH + H(+). It participates in amino-acid biosynthesis; L-isoleucine biosynthesis; L-isoleucine from 2-oxobutanoate: step 2/4. The protein operates within amino-acid biosynthesis; L-valine biosynthesis; L-valine from pyruvate: step 2/4. In terms of biological role, involved in the biosynthesis of branched-chain amino acids (BCAA). Catalyzes an alkyl-migration followed by a ketol-acid reduction of (S)-2-acetolactate (S2AL) to yield (R)-2,3-dihydroxy-isovalerate. In the isomerase reaction, S2AL is rearranged via a Mg-dependent methyl migration to produce 3-hydroxy-3-methyl-2-ketobutyrate (HMKB). In the reductase reaction, this 2-ketoacid undergoes a metal-dependent reduction by NADPH to yield (R)-2,3-dihydroxy-isovalerate. This is Ketol-acid reductoisomerase (NADP(+)) from Geobacillus sp. (strain WCH70).